The sequence spans 146 residues: 16.0 kDa heat shock protein, peroxisomal (146 aa).

Residues Trp23–Ser143 enclose the sHSP domain. The short motif at Ser144–Leu146 is the Microbody targeting signal element.

Belongs to the small heat shock protein (HSP20) family. May form oligomeric structures.

The protein localises to the peroxisome. In Oryza sativa subsp. japonica (Rice), this protein is 16.0 kDa heat shock protein, peroxisomal (HSP16.0).